The chain runs to 345 residues: D-erythrose-4-phosphate dehydrogenase (345 aa).

11-12 serves as a coordination point for NAD(+); sequence RI. Substrate is bound by residues 158-160, Arg-204, 217-218, and Arg-240; these read SCT and TK. The active-site Nucleophile is Cys-159. Asn-322 is a binding site for NAD(+).

Belongs to the glyceraldehyde-3-phosphate dehydrogenase family. Epd subfamily. Homotetramer.

The protein localises to the cytoplasm. It carries out the reaction D-erythrose 4-phosphate + NAD(+) + H2O = 4-phospho-D-erythronate + NADH + 2 H(+). It functions in the pathway cofactor biosynthesis; pyridoxine 5'-phosphate biosynthesis; pyridoxine 5'-phosphate from D-erythrose 4-phosphate: step 1/5. In terms of biological role, catalyzes the NAD-dependent conversion of D-erythrose 4-phosphate to 4-phosphoerythronate. The sequence is that of D-erythrose-4-phosphate dehydrogenase from Vibrio parahaemolyticus serotype O3:K6 (strain RIMD 2210633).